Consider the following 467-residue polypeptide: Transcriptional modulator WTM2 (467 aa).

The span at 1 to 12 (MAKSKSSQGASG) shows a compositional bias: low complexity. 2 disordered regions span residues 1–22 (MAKS…PSLY) and 84–121 (TFYD…AFQD). Acidic residues predominate over residues 87–100 (DDDDDDDNDDDDEE). WD repeat units follow at residues 244–282 (PGTN…KPLW), 287–327 (PKNG…LATT), and 349–389 (SGGD…SRND).

Its function is as follows. Transcriptional modulator with roles in meiotic regulation and silencing. This chain is Transcriptional modulator WTM2 (WTM2), found in Saccharomyces cerevisiae (strain ATCC 204508 / S288c) (Baker's yeast).